The chain runs to 775 residues: Tyrosine-protein phosphatase non-receptor type 12 (775 aa).

The residue at position 1 (methionine 1) is an N-acetylmethionine. Position 19 is a phosphoserine (serine 19). The Tyrosine-protein phosphatase domain maps to 28 to 293; the sequence is FARDFMRLRR…ELVHRAIAQL (266 aa). Substrate contacts are provided by residues aspartate 199, 231–237, and glutamine 278; that span reads CSAGCGR. Cysteine 231 functions as the Phosphocysteine intermediate in the catalytic mechanism. Residues 322–341 form a disordered region; sequence SSIDSEKQDSPPPKPPRTRS. Phosphoserine occurs at positions 331, 434, 448, and 467. The segment at 344–437 is interaction with TGFB1I1; sequence VEGDAKEEIL…KLERNLSFEI (94 aa). Residues 462 to 775 form a disordered region; sequence KIKSASSSVV…GPREPPSEWT (314 aa). Residue threonine 519 is modified to Phosphothreonine. A phosphoserine mark is found at serine 550 and serine 567. Positions 558–573 are enriched in polar residues; sequence NHSQTLKTVSSTPNST. Residue threonine 569 is modified to Phosphothreonine. Phosphoserine is present on serine 596. Threonine 598 carries the post-translational modification Phosphothreonine. Phosphoserine occurs at positions 603, 606, 608, and 613. Residues 622–640 show a composition bias toward low complexity; sequence TSISTASATVSPASSAESA. Residue serine 673 is modified to Phosphoserine. Residues 692–711 show a composition bias toward basic and acidic residues; that stretch reads VRPEWHELPNQEWSEQRESE. Serine 748 carries the phosphoserine modification. Over residues 766-775 the composition is skewed to basic and acidic residues; the sequence is GPREPPSEWT.

Belongs to the protein-tyrosine phosphatase family. Non-receptor class 4 subfamily. In terms of assembly, interacts with PSTPIP1 and TGFB1I1. Interacts with PTK2B/PYK2. Interacts with LPXN. Interacts with SORBS2; this interaction greatly enhances WASF1 dephosphorylation and might mediate partial translocation to focal adhesion sites. In terms of processing, phosphorylated by STK24/MST3 and this results in inhibition of its activity.

It localises to the cytoplasm. The protein resides in the cell junction. Its subcellular location is the focal adhesion. The protein localises to the cell projection. It is found in the podosome. It catalyses the reaction O-phospho-L-tyrosyl-[protein] + H2O = L-tyrosyl-[protein] + phosphate. Its function is as follows. Dephosphorylates a range of proteins, and thereby regulates cellular signaling cascades. Dephosphorylates cellular tyrosine kinases, such as ERBB2 and PTK2B/PYK2, and thereby regulates signaling via ERBB2 and PTK2B/PYK2. Selectively dephosphorylates ERBB2 phosphorylated at 'Tyr-1112', 'Tyr-1196', and/or 'Tyr-1248'. The sequence is that of Tyrosine-protein phosphatase non-receptor type 12 (Ptpn12) from Mus musculus (Mouse).